The chain runs to 479 residues: Aspartyl/glutamyl-tRNA(Asn/Gln) amidotransferase subunit B (479 aa).

Belongs to the GatB/GatE family. GatB subfamily. Heterotrimer of A, B and C subunits.

It catalyses the reaction L-glutamyl-tRNA(Gln) + L-glutamine + ATP + H2O = L-glutaminyl-tRNA(Gln) + L-glutamate + ADP + phosphate + H(+). It carries out the reaction L-aspartyl-tRNA(Asn) + L-glutamine + ATP + H2O = L-asparaginyl-tRNA(Asn) + L-glutamate + ADP + phosphate + 2 H(+). In terms of biological role, allows the formation of correctly charged Asn-tRNA(Asn) or Gln-tRNA(Gln) through the transamidation of misacylated Asp-tRNA(Asn) or Glu-tRNA(Gln) in organisms which lack either or both of asparaginyl-tRNA or glutaminyl-tRNA synthetases. The reaction takes place in the presence of glutamine and ATP through an activated phospho-Asp-tRNA(Asn) or phospho-Glu-tRNA(Gln). The chain is Aspartyl/glutamyl-tRNA(Asn/Gln) amidotransferase subunit B from Streptococcus pyogenes serotype M5 (strain Manfredo).